Reading from the N-terminus, the 463-residue chain is uncharacterized protein (463 aa).

12 consecutive transmembrane segments (helical) span residues 21-40 (DFAC…FFYT), 50-72 (AGTM…GTIV), 84-104 (PYLL…FTTP), 112-132 (LIYA…INVP), 156-176 (LFAN…AAYL), 186-206 (GWQL…IFCF), 237-257 (LVVL…SNSV), 271-291 (LVKW…PFIP), 311-331 (IIGL…ILVC), 334-354 (IAAA…PETI), 367-387 (GLIY…GGVV), and 408-428 (LMGI…LALI).

Belongs to the sodium:galactoside symporter (TC 2.A.2) family.

It is found in the cell membrane. This is an uncharacterized protein from Bacillus subtilis (strain 168).